Reading from the N-terminus, the 447-residue chain is Multicopper oxidase mco (447 aa).

A compositionally biased stretch (basic and acidic residues) spans 1–25; the sequence is MMDMKENDQKRNDMMDMKSHDERKN. The tract at residues 1–43 is disordered; it reads MMDMKENDQKRNDMMDMKSHDERKNLNSSQGKNEITFPKVLDP. Cu cation is bound by residues H107, H109, H147, H149, H375, H378, H380, H428, C429, H430, H434, and M439.

The protein belongs to the multicopper oxidase family. It depends on Cu cation as a cofactor.

It localises to the cytoplasm. Functionally, may be involved in copper homeostasis and oxidative stress response. Oxidizes the substrate 3,3'-dimethoxybenzidine in vitro. Also possesses low levels of phenoloxidase and ferroxidase activities. This is Multicopper oxidase mco (mco) from Staphylococcus aureus.